The sequence spans 195 residues: U8 snoRNA-decapping enzyme (195 aa).

A Nudix hydrolase domain is found at 18-173 (GWRHACHALL…IGSAREQLLE (156 aa)). Substrate is bound by residues H24, R50, and F57. The Mn(2+) site is built by G59, E76, E80, and H99. The short motif at 61–82 (FVDTQDRSLEDGLNRELREELG) is the Nudix box element. Q170 contributes to the substrate binding site. Mn(2+) is bound at residue E173.

Belongs to the Nudix hydrolase family. NUDT16 subfamily. In terms of assembly, homodimer. Requires Mg(2+) as cofactor. It depends on Mn(2+) as a cofactor. Co(2+) is required as a cofactor. As to expression, expressed strongly in lung, kidney, adrenal gland, testis, heart and brain.

It localises to the nucleus. Its subcellular location is the nucleoplasm. The protein resides in the nucleolus. The protein localises to the cytoplasm. The enzyme catalyses a 5'-end (N(7)-methyl 5'-triphosphoguanosine)-ribonucleoside in mRNA + H2O = N(7)-methyl-GDP + a 5'-end phospho-ribonucleoside in mRNA + 2 H(+). It catalyses the reaction IDP + H2O = IMP + phosphate + H(+). The catalysed reaction is dIDP + H2O = dIMP + phosphate + H(+). It carries out the reaction a 5'-end NAD(+)-phospho-ribonucleoside in mRNA + H2O = a 5'-end phospho-adenosine-phospho-ribonucleoside in mRNA + beta-nicotinamide D-ribonucleotide + 2 H(+). The enzyme catalyses a 5'-end FAD-phospho-ribonucleoside in mRNA + H2O = a 5'-end phospho-adenosine-phospho-ribonucleoside in mRNA + FMN + 2 H(+). It catalyses the reaction a 5'-end CoA-ribonucleoside in mRNA + H2O = a 5'-end phospho-adenosine-phospho-ribonucleoside in mRNA + (R)-4'-phosphopantetheine + 2 H(+). The phosphatase activity is inhibited by the product IMP. RNA-binding and decapping enzyme that catalyzes the cleavage of the cap structure of snoRNAs and mRNAs in a metal-dependent manner. Part of the U8 snoRNP complex that is required for the accumulation of mature 5.8S and 28S rRNA. Has diphosphatase activity and removes m7G and/or m227G caps from U8 snoRNA and leaves a 5'monophosphate on the RNA. Also catalyzes the cleavage of the cap structure on mRNAs. Does not hydrolyze cap analog structures like 7-methylguanosine nucleoside triphosphate (m7GpppG). Also hydrolysis m7G- and m227G U3-capped RNAs but with less efficiencies. Has broad substrate specificity with manganese or cobalt as cofactor and can act on various RNA species. Binds to the U8 snoRNA; metal is not required for RNA-binding. May play a role in the regulation of snoRNAs and mRNAs degradation. Also acts as a phosphatase; hydrolyzes the non-canonical purine nucleotides inosine diphosphate (IDP) and deoxyinosine diphosphate (dITP) as well as guanosine diphosphate (GDP), deoxyguanosine diphosphate (dGDP), xanthine diphosphate (XDP), inosine triphosphate (ITP) and deoxyinosine triphosphate (ITP) to their respective monophosphate derivatives and does not distinguish between the deoxy- and ribose forms. The order of activity with different substrates is IDP &gt; dIDP &gt;&gt; GDP = dGDP &gt; XDP = ITP = dITP. Binds strongly to GTP, ITP and XTP. Participates in the hydrolysis of dIDP/IDP and probably excludes non-canonical purines from RNA and DNA precursor pools, thus preventing their incorporation into RNA and DNA and avoiding chromosomal lesions. Exhibits decapping activity towards NAD-capped RNAs and FAD-capped RNAs. Exhibits decapping activity towards dpCoA-capped RNAs in vitro. This is U8 snoRNA-decapping enzyme (NUDT16) from Homo sapiens (Human).